A 670-amino-acid polypeptide reads, in one-letter code: Solute carrier organic anion transporter family member 1A1 (670 aa).

The Cytoplasmic segment spans residues Met1–Lys20. A helical transmembrane segment spans residues Val21–Met40. Over Asn41–Gly59 the chain is Extracellular. The chain crosses the membrane as a helical span at residues Leu60–Gly80. Residues Thr81 to Pro86 are Cytoplasmic-facing. The helical transmembrane segment at Val87–Gly111 threads the bilayer. The Extracellular segment spans residues Arg112–Ser155. N-linked (GlcNAc...) asparagine glycans are attached at residues Asn124 and Asn135. Residues Leu156 to Glu184 form a helical membrane-spanning segment. Topologically, residues Asp185–Lys203 are cytoplasmic. A helical transmembrane segment spans residues Val204–Ile224. The Extracellular portion of the chain corresponds to Gly225–Val242. Residues Gly243–Pro267 form a helical membrane-spanning segment. The Cytoplasmic segment spans residues Lys268 to Arg311. The chain crosses the membrane as a helical span at residues Leu312–Ile333. Over Asn334 to Glu353 the chain is Extracellular. A helical transmembrane segment spans residues Ala354–Met377. At Lys378–Lys381 the chain is on the cytoplasmic side. A helical transmembrane segment spans residues Ile382–His405. At Phe406–Phe513 the chain is on the extracellular side. In terms of domain architecture, Kazal-like spans Ser433–Gln488. Disulfide bonds link Cys439-Cys469, Cys445-Cys465, and Cys454-Cys486. A glycan (N-linked (GlcNAc...) asparagine) is linked at Asn492. A helical transmembrane segment spans residues Leu514 to Leu536. Residues Arg537 to Ser545 are Cytoplasmic-facing. The chain crosses the membrane as a helical span at residues Leu546 to Ile571. At Asp572 to Pro605 the chain is on the extracellular side. The helical transmembrane segment at Ile606–Met623 threads the bilayer. Topologically, residues Arg624–Leu670 are cytoplasmic. Phosphoserine occurs at positions 634 and 635. Positions Gly645–Val654 are enriched in basic and acidic residues. The tract at residues Gly645 to Leu670 is disordered.

This sequence belongs to the organo anion transporter (TC 2.A.60) family. As to quaternary structure, binds to PDZK1. Interaction with PDZK1 is required for expression on hepatocyte surface. Post-translationally, glycosylated. As to expression, highly expressed in liver and kidney, and at lower levels in brain, lung, skeletal muscle and proximal colon.

Its subcellular location is the basolateral cell membrane. It catalyses the reaction estrone 3-sulfate(out) + hydrogencarbonate(in) = estrone 3-sulfate(in) + hydrogencarbonate(out). It carries out the reaction taurocholate(out) + hydrogencarbonate(in) = taurocholate(in) + hydrogencarbonate(out). The enzyme catalyses L-thyroxine(out) = L-thyroxine(in). The catalysed reaction is prostaglandin E2(out) = prostaglandin E2(in). It catalyses the reaction 17beta-estradiol 17-O-(beta-D-glucuronate)(out) = 17beta-estradiol 17-O-(beta-D-glucuronate)(in). It carries out the reaction dehydroepiandrosterone 3-sulfate(out) = dehydroepiandrosterone 3-sulfate(in). Functionally, mediates the Na(+)-independent transport of organic anions such as steroid sulfate conjugates (dehydroepiandrosterone sulfate (DHEAS), 17-beta-glucuronosyl estradiol, estrone-3-sulfate), conjugated (taurocholate) and unconjugated (cholate) bile acids, prostaglandin E2 (PGE2) and L-thyroxine T4. Also capable of transporting sulfobromophthalein (BSP), ouabain and gadoxetate. Hydrogencarbonate/HCO3(-) acts as the probable counteranion that exchanges for organic anions. Shows a pH-sensitive substrate specificity which may be ascribed to the protonation state of the binding site and leads to a stimulation of substrate transport in an acidic microenvironment. This Rattus norvegicus (Rat) protein is Solute carrier organic anion transporter family member 1A1.